A 97-amino-acid polypeptide reads, in one-letter code: Aspartyl/glutamyl-tRNA(Asn/Gln) amidotransferase subunit C (97 aa).

The protein belongs to the GatC family. In terms of assembly, heterotrimer of A, B and C subunits.

It catalyses the reaction L-glutamyl-tRNA(Gln) + L-glutamine + ATP + H2O = L-glutaminyl-tRNA(Gln) + L-glutamate + ADP + phosphate + H(+). The catalysed reaction is L-aspartyl-tRNA(Asn) + L-glutamine + ATP + H2O = L-asparaginyl-tRNA(Asn) + L-glutamate + ADP + phosphate + 2 H(+). Its function is as follows. Allows the formation of correctly charged Asn-tRNA(Asn) or Gln-tRNA(Gln) through the transamidation of misacylated Asp-tRNA(Asn) or Glu-tRNA(Gln) in organisms which lack either or both of asparaginyl-tRNA or glutaminyl-tRNA synthetases. The reaction takes place in the presence of glutamine and ATP through an activated phospho-Asp-tRNA(Asn) or phospho-Glu-tRNA(Gln). The protein is Aspartyl/glutamyl-tRNA(Asn/Gln) amidotransferase subunit C of Prochlorococcus marinus subsp. pastoris (strain CCMP1986 / NIES-2087 / MED4).